Here is a 483-residue protein sequence, read N- to C-terminus: Aspartyl/glutamyl-tRNA(Asn/Gln) amidotransferase subunit B (483 aa).

Belongs to the GatB/GatE family. GatB subfamily. Heterotrimer of A, B and C subunits.

The catalysed reaction is L-glutamyl-tRNA(Gln) + L-glutamine + ATP + H2O = L-glutaminyl-tRNA(Gln) + L-glutamate + ADP + phosphate + H(+). It catalyses the reaction L-aspartyl-tRNA(Asn) + L-glutamine + ATP + H2O = L-asparaginyl-tRNA(Asn) + L-glutamate + ADP + phosphate + 2 H(+). Allows the formation of correctly charged Asn-tRNA(Asn) or Gln-tRNA(Gln) through the transamidation of misacylated Asp-tRNA(Asn) or Glu-tRNA(Gln) in organisms which lack either or both of asparaginyl-tRNA or glutaminyl-tRNA synthetases. The reaction takes place in the presence of glutamine and ATP through an activated phospho-Asp-tRNA(Asn) or phospho-Glu-tRNA(Gln). This chain is Aspartyl/glutamyl-tRNA(Asn/Gln) amidotransferase subunit B, found in Roseiflexus castenholzii (strain DSM 13941 / HLO8).